The sequence spans 412 residues: CCA-adding enzyme (412 aa).

Residues S41 and K44 each contribute to the ATP site. S41 and K44 together coordinate CTP. D53, D55, and D106 together coordinate Mg(2+). Residues H129, K149, and Y158 each coordinate ATP. The CTP site is built by H129, K149, and Y158.

Belongs to the tRNA nucleotidyltransferase/poly(A) polymerase family. Archaeal CCA-adding enzyme subfamily. As to quaternary structure, homodimer. The cofactor is Mg(2+).

It carries out the reaction a tRNA precursor + 2 CTP + ATP = a tRNA with a 3' CCA end + 3 diphosphate. It catalyses the reaction a tRNA with a 3' CCA end + 2 CTP + ATP = a tRNA with a 3' CCACCA end + 3 diphosphate. In terms of biological role, catalyzes the addition and repair of the essential 3'-terminal CCA sequence in tRNAs without using a nucleic acid template. Adds these three nucleotides in the order of C, C, and A to the tRNA nucleotide-73, using CTP and ATP as substrates and producing inorganic pyrophosphate. tRNA 3'-terminal CCA addition is required both for tRNA processing and repair. Also involved in tRNA surveillance by mediating tandem CCA addition to generate a CCACCA at the 3' terminus of unstable tRNAs. While stable tRNAs receive only 3'-terminal CCA, unstable tRNAs are marked with CCACCA and rapidly degraded. The chain is CCA-adding enzyme from Saccharolobus islandicus (strain Y.N.15.51 / Yellowstone #2) (Sulfolobus islandicus).